The primary structure comprises 226 residues: Cytidylate kinase (226 aa).

An ATP-binding site is contributed by 10-18 (GPASSGKST).

This sequence belongs to the cytidylate kinase family. Type 1 subfamily.

The protein localises to the cytoplasm. It catalyses the reaction CMP + ATP = CDP + ADP. The catalysed reaction is dCMP + ATP = dCDP + ADP. The protein is Cytidylate kinase of Streptococcus pyogenes serotype M18 (strain MGAS8232).